The chain runs to 317 residues: Acetyl-coenzyme A carboxylase carboxyl transferase subunit alpha (317 aa).

The 255-residue stretch at 39–293 (RLKKKSISLT…KTSLAQGVAE (255 aa)) folds into the CoA carboxyltransferase C-terminal domain.

This sequence belongs to the AccA family. Acetyl-CoA carboxylase is a heterohexamer composed of biotin carboxyl carrier protein (AccB), biotin carboxylase (AccC) and two subunits each of ACCase subunit alpha (AccA) and ACCase subunit beta (AccD).

It is found in the cytoplasm. The enzyme catalyses N(6)-carboxybiotinyl-L-lysyl-[protein] + acetyl-CoA = N(6)-biotinyl-L-lysyl-[protein] + malonyl-CoA. It functions in the pathway lipid metabolism; malonyl-CoA biosynthesis; malonyl-CoA from acetyl-CoA: step 1/1. Component of the acetyl coenzyme A carboxylase (ACC) complex. First, biotin carboxylase catalyzes the carboxylation of biotin on its carrier protein (BCCP) and then the CO(2) group is transferred by the carboxyltransferase to acetyl-CoA to form malonyl-CoA. The polypeptide is Acetyl-coenzyme A carboxylase carboxyl transferase subunit alpha (Marinobacter nauticus (strain ATCC 700491 / DSM 11845 / VT8) (Marinobacter aquaeolei)).